The sequence spans 89 residues: UPF0213 protein LMOf2365_0181 (89 aa).

The GIY-YIG domain maps to 5 to 80 (SEHFFYVLKC…KKLSRKNKDA (76 aa)).

This sequence belongs to the UPF0213 family.

The chain is UPF0213 protein LMOf2365_0181 from Listeria monocytogenes serotype 4b (strain F2365).